The primary structure comprises 393 residues: Phospholipid-transporting ATPase accessory subunit CRF1 (393 aa).

Topologically, residues 1-46 (MGLILRWKEKKQLSSKQNAQKSRKPANTSFRQQRLKAWQPILSPQS) are cytoplasmic. The chain crosses the membrane as a helical span at residues 47 to 67 (VLPLLILMACVFAPIGIGLVV). At 68 to 334 (STISVQRLVV…NSIIGAGNEA (267 aa)) the chain is on the lumenal side. The interval 70–332 (ISVQRLVVNY…TTNSIIGAGN (263 aa)) is confers specificity for binding DNF3. N-linked (GlcNAc...) asparagine glycans are attached at residues Asn78, Asn123, Asn187, Asn202, Asn213, Asn240, and Asn291. Cystine bridges form between Cys82–Cys126 and Cys179–Cys193. The helical transmembrane segment at 335–355 (LGIVYLIVAGIATLFAILFLI) threads the bilayer. Residues 356–393 (KVIFKPRPMHDHSYLNFENSDTPFDESSVVSIPLREIL) are Cytoplasmic-facing.

This sequence belongs to the CDC50/LEM3 family. Component of a flippase complex consisting of DNF3 and YNR048W/CRF1. Interacts with DNF3; the interaction is direct and required for proper expression and endoplasmic reticulum (ER) export of either partner.

Its subcellular location is the golgi apparatus. It localises to the trans-Golgi network membrane. Accessory component of a P4-ATPase flippase complex which catalyzes the hydrolysis of ATP coupled to the transport of phosphatidylcholine and small amounts of phosphatidylethanolamine from the lumen to the cytosolic leaflet of the trans-Golgi network and ensures the maintenance of asymmetric distribution of phospholipids. May be involved in transport from early endosomes to the trans-Golgi network (TGN). This is Phospholipid-transporting ATPase accessory subunit CRF1 from Saccharomyces cerevisiae (strain ATCC 204508 / S288c) (Baker's yeast).